Reading from the N-terminus, the 409-residue chain is Wadjet protein JetD (409 aa).

Functionally, component of antiplasmid transformation system Wadjet type I, composed of JetA, JetB, JetC and JetD. Expression of Wadjet type I in B.subtilis (strain BEST7003) reduces the transformation efficiency of plasmid pHCMC05. The sequence is that of Wadjet protein JetD from Bacillus cereus (strain Q1).